We begin with the raw amino-acid sequence, 291 residues long: Elongation factor Ts (291 aa).

The interval threonine 80–valine 83 is involved in Mg(2+) ion dislocation from EF-Tu.

Belongs to the EF-Ts family.

The protein localises to the cytoplasm. Associates with the EF-Tu.GDP complex and induces the exchange of GDP to GTP. It remains bound to the aminoacyl-tRNA.EF-Tu.GTP complex up to the GTP hydrolysis stage on the ribosome. The protein is Elongation factor Ts of Ligilactobacillus salivarius (strain UCC118) (Lactobacillus salivarius).